Consider the following 174-residue polypeptide: MKRSEKAAVIEAIKAKADKASFAVLTDFKGMTVEELTNLRGSLRKAGGEYLVVKNTLARIALTDGTHDVIKDKFRENIGVAFGFDDPVAVAKALSDFAKQSKLFELRCASLDGKALEVAQIDALAKLPGREQLLGHLLGTMNAVPTNFVSLFANVLRGLLYALKGIEEQKSNAA.

The protein belongs to the universal ribosomal protein uL10 family. Part of the ribosomal stalk of the 50S ribosomal subunit. The N-terminus interacts with L11 and the large rRNA to form the base of the stalk. The C-terminus forms an elongated spine to which L12 dimers bind in a sequential fashion forming a multimeric L10(L12)X complex.

Its function is as follows. Forms part of the ribosomal stalk, playing a central role in the interaction of the ribosome with GTP-bound translation factors. In Desulfovibrio desulfuricans (strain ATCC 27774 / DSM 6949 / MB), this protein is Large ribosomal subunit protein uL10.